The primary structure comprises 68 residues: Defensin gallicin (68 aa).

Positions 1–16 (MWIESDAGVAIDRHAR) are cleaved as a signal peptide.

Contains 5 disulfide bonds. Expressed in hemolymph, gills, digestive gland, foot, adductor muscles and mantle.

It is found in the secreted. The protein resides in the target cell membrane. Its function is as follows. Shows antibacterial activity against numerous Gram-positive bacteria. It selectively inhibits peptidoglycan biosynthesis through complex formation with the cell wall precursor lipid II (1:1 molar ratio) thus inhibiting cell wall synthesis. The chain is Defensin gallicin from Mytilus galloprovincialis (Mediterranean mussel).